The sequence spans 305 residues: U6 small nuclear RNA (adenine-(43)-N(6))-methyltransferase (305 aa).

S-adenosyl-L-methionine contacts are provided by Arg-85, Gly-110, Glu-133, Ser-164, and Asn-186. Residues 194–217 (SPNPFGGNTRNPQRRPAPNNVRTG) are disordered.

The protein belongs to the methyltransferase superfamily. METTL16/RlmF family.

The catalysed reaction is adenosine in U6 snRNA + S-adenosyl-L-methionine = N(6)-methyladenosine in U6 snRNA + S-adenosyl-L-homocysteine + H(+). In terms of biological role, RNA N6-methyltransferase that mediates N6-methylation of adenine of U6 small nuclear RNA (U6 snRNA). The sequence is that of U6 small nuclear RNA (adenine-(43)-N(6))-methyltransferase from Drosophila pseudoobscura pseudoobscura (Fruit fly).